A 157-amino-acid polypeptide reads, in one-letter code: MKLSLMVAISKNGVIGNGPDIPWSAKGEQLLFKAITYNQWLLVGRKTFESMGALPNRKYAVVTRSSFTSDNENVLIFPSIKDALTNLKKITDHVIVSGGGEIYKSLIDQVDTLHISTIDIEPEGDVYFPEIPSNFRPVFTQDFASNINYSYQIWQKG.

The DHFR domain maps to 2-156 (KLSLMVAISK…INYSYQIWQK (155 aa)).

This sequence belongs to the dihydrofolate reductase family. Homodimer.

It catalyses the reaction (6S)-5,6,7,8-tetrahydrofolate + NADP(+) = 7,8-dihydrofolate + NADPH + H(+). It participates in cofactor biosynthesis; tetrahydrofolate biosynthesis; 5,6,7,8-tetrahydrofolate from 7,8-dihydrofolate: step 1/1. Key enzyme in folate metabolism. Catalyzes an essential reaction for de novo glycine and purine synthesis, and for DNA precursor synthesis. This Escherichia coli protein is Dihydrofolate reductase type 1 (dhfrI).